A 335-amino-acid chain; its full sequence is E3 ubiquitin ligase rnf-121 (335 aa).

Residues 1-47 are Cytoplasmic-facing; it reads MGQHGAIRLQNEVQEGMPPPHELTEEEQWAEEHRKMHEKHKGHEAMH. The chain crosses the membrane as a helical span at residues 48-68; it reads MEMMVIFMISVIVGQIFLVTW. Residues 69–72 lie on the Lumenal side of the membrane; it reads KRKH. A helical transmembrane segment spans residues 73–93; sequence FKSYQMCTLIGMLTIPVYVCF. Residues 94 to 99 are Cytoplasmic-facing; the sequence is NRSWYR. A helical transmembrane segment spans residues 100–120; that stretch reads FLATWLVFCIFSAFIWLKASA. The Lumenal portion of the chain corresponds to 121–143; that stretch reads QHISGGTPRFVYKWFLFLHKLSY. Residues 144 to 164 traverse the membrane as a helical segment; it reads VLGVVGYLIMMGALLGFHVLF. Residues 165 to 168 lie on the Cytoplasmic side of the membrane; it reads GVSQ. A helical membrane pass occupies residues 169 to 189; the sequence is PTLMDAGILFMFYGVYYGVLG. Residues 190–335 lie on the Lumenal side of the membrane; it reads RDFAHICTAR…QGLTTWMGLE (146 aa). The RING-type; atypical zinc finger occupies 222–284; the sequence is CAVCGGRLDD…GKLQTCPYCK (63 aa).

Belongs to the RNF121 family. In terms of tissue distribution, expressed in body wall muscles, the hypodermis, seam cells, vulval cells, spermathecal cells, uterine cells and the distal tip cell (at protein level).

The protein resides in the endoplasmic reticulum membrane. It is found in the golgi apparatus membrane. The enzyme catalyses S-ubiquitinyl-[E2 ubiquitin-conjugating enzyme]-L-cysteine + [acceptor protein]-L-lysine = [E2 ubiquitin-conjugating enzyme]-L-cysteine + N(6)-ubiquitinyl-[acceptor protein]-L-lysine.. The protein operates within protein modification; protein ubiquitination. Functionally, E3 ubiquitin ligase which accepts ubiquitin and transfers it to substrates such as the beta-integrin subunit pat-3, promoting their degradation by the endoplasmic reticulum-associated degradation (ERAD) pathway which is a pathway involved in ubiquitin-dependent degradation of misfolded endoplasmic reticulum proteins. Negatively regulates the unfolded protein response to reduce endoplasmic reticulum stress. Required for the cessation of distal tip cell migration at the end of larval morphogenesis. Plays a role in germline and gonad development. The sequence is that of E3 ubiquitin ligase rnf-121 from Caenorhabditis elegans.